Reading from the N-terminus, the 137-residue chain is uncharacterized protein (137 aa).

A helical transmembrane segment spans residues 20-42 (TVLAFKGEGALALAGLLVMAAVA).

It is found in the host membrane. This is an uncharacterized protein from Dryophytes versicolor (chameleon treefrog).